A 774-amino-acid polypeptide reads, in one-letter code: Protein translocase subunit SecA (774 aa).

ATP-binding positions include Gln-66, 84–88 (GEGKS), and Asp-474.

It belongs to the SecA family.

The protein resides in the plastid. Its subcellular location is the chloroplast stroma. The protein localises to the chloroplast thylakoid membrane. It catalyses the reaction ATP + H2O + cellular proteinSide 1 = ADP + phosphate + cellular proteinSide 2.. Its function is as follows. Has a central role in coupling the hydrolysis of ATP to the transfer of proteins across the thylakoid membrane. This Cyanidioschyzon merolae (strain NIES-3377 / 10D) (Unicellular red alga) protein is Protein translocase subunit SecA.